The primary structure comprises 514 residues: Xylose import ATP-binding protein XylG (514 aa).

2 ABC transporter domains span residues 7–246 (FEMR…VGRE) and 263–508 (LEAR…IHAE). 39–46 (GENGAGKS) lines the ATP pocket.

The protein belongs to the ABC transporter superfamily. Xylose importer (TC 3.A.1.2.4) family. In terms of assembly, the complex is composed of two ATP-binding proteins (XylG), two transmembrane proteins (XylH) and a solute-binding protein (XylF).

The protein localises to the cell inner membrane. The catalysed reaction is D-xylose(out) + ATP + H2O = D-xylose(in) + ADP + phosphate + H(+). Part of the ABC transporter complex XylFGH involved in xylose import. Responsible for energy coupling to the transport system. The chain is Xylose import ATP-binding protein XylG from Ralstonia nicotianae (strain ATCC BAA-1114 / GMI1000) (Ralstonia solanacearum).